The sequence spans 194 residues: Probable GTP-binding protein EngB (194 aa).

Residues 23 to 194 (LNGEFVFVGR…YELIEIFGGV (172 aa)) form the EngB-type G domain. GTP is bound by residues 31–38 (GRSNVGKS), 57–61 (GKTAS), 75–78 (DLPG), 143–146 (TKMD), and 173–175 (YSA). Positions 38 and 59 each coordinate Mg(2+).

The protein belongs to the TRAFAC class TrmE-Era-EngA-EngB-Septin-like GTPase superfamily. EngB GTPase family. It depends on Mg(2+) as a cofactor.

Necessary for normal cell division and for the maintenance of normal septation. The protein is Probable GTP-binding protein EngB of Thermosipho africanus (strain TCF52B).